Here is a 400-residue protein sequence, read N- to C-terminus: Phosphoglycerate kinase (400 aa).

Substrate is bound by residues 22 to 24 (DFN), R38, 61 to 64 (HLGR), R119, and R152. ATP is bound by residues K205, G296, E327, and 353–356 (GGDT).

It belongs to the phosphoglycerate kinase family. In terms of assembly, monomer.

It localises to the cytoplasm. The enzyme catalyses (2R)-3-phosphoglycerate + ATP = (2R)-3-phospho-glyceroyl phosphate + ADP. Its pathway is carbohydrate degradation; glycolysis; pyruvate from D-glyceraldehyde 3-phosphate: step 2/5. This is Phosphoglycerate kinase from Campylobacter jejuni subsp. jejuni serotype O:6 (strain 81116 / NCTC 11828).